Reading from the N-terminus, the 143-residue chain is Nucleoside diphosphate kinase (143 aa).

ATP is bound by residues Lys-11, Phe-59, Arg-87, Thr-93, Arg-104, and Asn-114. His-117 serves as the catalytic Pros-phosphohistidine intermediate.

Belongs to the NDK family. In terms of assembly, homotetramer. Mg(2+) is required as a cofactor.

Its subcellular location is the cytoplasm. The catalysed reaction is a 2'-deoxyribonucleoside 5'-diphosphate + ATP = a 2'-deoxyribonucleoside 5'-triphosphate + ADP. It catalyses the reaction a ribonucleoside 5'-diphosphate + ATP = a ribonucleoside 5'-triphosphate + ADP. Its function is as follows. Major role in the synthesis of nucleoside triphosphates other than ATP. The ATP gamma phosphate is transferred to the NDP beta phosphate via a ping-pong mechanism, using a phosphorylated active-site intermediate. The protein is Nucleoside diphosphate kinase of Shigella boydii serotype 4 (strain Sb227).